The chain runs to 173 residues: Coordinator of PRMT5 and differentiation stimulator (173 aa).

At Met-1 the chain carries N-acetylmethionine. The segment at 1–70 (MDPQAATGRG…EGPSSEEEGF (70 aa)) is disordered. Phosphoserine occurs at positions 64 and 65.

As to quaternary structure, interacts with PRMT5. Interacts with histone H4; specifically interacts with the N-terminus of histone H4 but not with histone H3. Interacts with CBFB. Found in a complex with PRMT5, RUNX1 and CBFB.

The protein localises to the nucleus. Histone-binding protein required for histone H4 methyltransferase activity of PRMT5. Specifically required for histone H4 'Arg-3' methylation mediated by PRMT5, but not histone H3 'Arg-8' methylation, suggesting that it modulates the substrate specificity of PRMT5. Specifically interacts with the N-terminus of histone H4 but not with histone H3, suggesting that it acts by promoting the association between histone H4 and PRMT5. Involved in CCNE1 promoter repression. Plays a role in muscle cell differentiation by modulating the recruitment of PRMT5 to the promoter of genes involved in the coordination between cell cycle exit and muscle differentiation. The sequence is that of Coordinator of PRMT5 and differentiation stimulator (Coprs) from Mus musculus (Mouse).